The primary structure comprises 360 residues: 3-isopropylmalate dehydrogenase (360 aa).

An NAD(+)-binding site is contributed by 76-89; sequence GPKWDKIERDIRPE. 4 residues coordinate substrate: Arg96, Arg106, Arg134, and Asp224. Asp224, Asp248, and Asp252 together coordinate Mg(2+). 282–294 provides a ligand contact to NAD(+); it reads GSAPDIAGQGIAN.

It belongs to the isocitrate and isopropylmalate dehydrogenases family. LeuB type 1 subfamily. As to quaternary structure, homodimer. Requires Mg(2+) as cofactor. Mn(2+) serves as cofactor.

Its subcellular location is the cytoplasm. It catalyses the reaction (2R,3S)-3-isopropylmalate + NAD(+) = 4-methyl-2-oxopentanoate + CO2 + NADH. Its pathway is amino-acid biosynthesis; L-leucine biosynthesis; L-leucine from 3-methyl-2-oxobutanoate: step 3/4. Functionally, catalyzes the oxidation of 3-carboxy-2-hydroxy-4-methylpentanoate (3-isopropylmalate) to 3-carboxy-4-methyl-2-oxopentanoate. The product decarboxylates to 4-methyl-2 oxopentanoate. The polypeptide is 3-isopropylmalate dehydrogenase (Pseudomonas fluorescens (strain ATCC BAA-477 / NRRL B-23932 / Pf-5)).